The primary structure comprises 82 residues: RNA-binding protein Hfq (82 aa).

One can recognise a Sm domain in the interval 11–72; the sequence is DTFLNAVRKS…ISTIAPSAPV (62 aa).

The protein belongs to the Hfq family. Homohexamer.

Its function is as follows. RNA chaperone that binds small regulatory RNA (sRNAs) and mRNAs to facilitate mRNA translational regulation in response to envelope stress, environmental stress and changes in metabolite concentrations. Also binds with high specificity to tRNAs. This Hyphomonas neptunium (strain ATCC 15444) protein is RNA-binding protein Hfq.